The sequence spans 82 residues: Proline, histidine and glycine-rich protein 1 (82 aa).

The interval 20–82 is disordered; the sequence is HCGPPPGHGP…PGHPPPGPHH (63 aa).

The protein is Proline, histidine and glycine-rich protein 1 (PHGR1) of Homo sapiens (Human).